A 105-amino-acid chain; its full sequence is uncharacterized protein (105 aa).

2 consecutive transmembrane segments (helical) span residues 10–30 and 48–68; these read YVVF…FKIG and YPLA…YPPS.

The protein localises to the membrane. This is an uncharacterized protein from Acanthamoeba polyphaga mimivirus (APMV).